A 256-amino-acid chain; its full sequence is 1-(5-phosphoribosyl)-5-[(5-phosphoribosylamino)methylideneamino] imidazole-4-carboxamide isomerase (256 aa).

Catalysis depends on Asp-8, which acts as the Proton acceptor. Asp-130 functions as the Proton donor in the catalytic mechanism.

Belongs to the HisA/HisF family.

It is found in the cytoplasm. It carries out the reaction 1-(5-phospho-beta-D-ribosyl)-5-[(5-phospho-beta-D-ribosylamino)methylideneamino]imidazole-4-carboxamide = 5-[(5-phospho-1-deoxy-D-ribulos-1-ylimino)methylamino]-1-(5-phospho-beta-D-ribosyl)imidazole-4-carboxamide. The protein operates within amino-acid biosynthesis; L-histidine biosynthesis; L-histidine from 5-phospho-alpha-D-ribose 1-diphosphate: step 4/9. This is 1-(5-phosphoribosyl)-5-[(5-phosphoribosylamino)methylideneamino] imidazole-4-carboxamide isomerase from Chlorobium phaeobacteroides (strain DSM 266 / SMG 266 / 2430).